The following is a 156-amino-acid chain: CD-NTase/cGAS isopeptidase (156 aa).

In terms of domain architecture, MPN spans 9–147; it reads IDDFDNHVVI…WIGKKIKNDI (139 aa). The active-site Proton donor/acceptor is glutamate 38. Positions 100, 102, and 113 each coordinate Zn(2+). The short motif at 100-113 is the JAMM motif element; sequence HTHPEDFPHPSFID.

Belongs to the peptidase M67B family. Cap3 isopeptidase subfamily.

Metalloprotease priming reversal component of a CBASS antivirus system. CBASS (cyclic oligonucleotide-based antiphage signaling system) provides immunity against bacteriophages. The CD-NTase protein (DncV) synthesizes cyclic nucleotides in response to infection; these serve as specific second messenger signals. The signals activate a diverse range of effectors, leading to bacterial cell death and thus abortive phage infection. A type II-A(GA) CBASS system. Functionally, reverses the primed state of DncV, the CD-NTase, cleaving it from cellular proteins. Cleaves a Sumo-DncV-DncV fusion protein precisely between the 2 DncV moieties. Its function is as follows. Protects E.coli against phage infection. When capV and dncV are introduced in E.coli MG1655 there is 1000-fold protection against phage P1; protection against other phage (T4, T5 and T6) requires the 2 subsequent genes. In another paper the capV-dncV-cap2-cap3 operon gives 10(4)-10(5)-fold protection against phages lambda, T2, T4 and T6, about 1000-fold protection against P1 and 10-fold protection against T5. This is CD-NTase/cGAS isopeptidase from Escherichia coli (strain TW11681).